Reading from the N-terminus, the 388-residue chain is 3-dehydroquinate synthase (388 aa).

It belongs to the archaeal-type DHQ synthase family.

The enzyme catalyses 2-amino-2,3,7-trideoxy-D-lyxo-hept-6-ulosonate + NAD(+) + H2O = 3-dehydroquinate + NH4(+) + NADH + H(+). Functionally, catalyzes the oxidative deamination and cyclization of 2-amino-3,7-dideoxy-D-threo-hept-6-ulosonic acid (ADH) to yield 3-dehydroquinate (DHQ), which is fed into the canonical shikimic pathway of aromatic amino acid biosynthesis. The chain is 3-dehydroquinate synthase from Natronomonas pharaonis (strain ATCC 35678 / DSM 2160 / CIP 103997 / JCM 8858 / NBRC 14720 / NCIMB 2260 / Gabara) (Halobacterium pharaonis).